The sequence spans 340 residues: Fructose-1,6-bisphosphatase class 1 (340 aa).

Mg(2+) is bound by residues glutamate 107, aspartate 126, leucine 128, and aspartate 129. Asparagine 215 lines the substrate pocket. Glutamate 287 contributes to the Mg(2+) binding site.

The protein belongs to the FBPase class 1 family. As to quaternary structure, homotetramer. The cofactor is Mg(2+).

The protein localises to the cytoplasm. It catalyses the reaction beta-D-fructose 1,6-bisphosphate + H2O = beta-D-fructose 6-phosphate + phosphate. It participates in carbohydrate biosynthesis; gluconeogenesis. The sequence is that of Fructose-1,6-bisphosphatase class 1 from Brucella suis biovar 1 (strain 1330).